A 607-amino-acid chain; its full sequence is Chaperone protein DnaK (607 aa).

A Phosphothreonine; by autocatalysis modification is found at Thr173. Composition is skewed to basic and acidic residues over residues 490-509 (EQNA…RNEA) and 524-542 (GDNV…KEAL). 3 disordered regions span residues 490–510 (EQNA…NEAD), 524–555 (GDNV…EDIK), and 574–607 (QQAQ…KDNK). Residues 574–587 (QQAQQGDAAGSNQS) show a composition bias toward polar residues. The segment covering 595–607 (TEVKDDDDKKDNK) has biased composition (basic and acidic residues).

It belongs to the heat shock protein 70 family.

In terms of biological role, acts as a chaperone. This chain is Chaperone protein DnaK, found in Staphylococcus carnosus (strain TM300).